Here is a 153-residue protein sequence, read N- to C-terminus: D-aminoacyl-tRNA deacylase (153 aa).

The Gly-cisPro motif, important for rejection of L-amino acids motif lies at 142-143 (GP).

It belongs to the DTD family. In terms of assembly, homodimer.

Its subcellular location is the cytoplasm. It carries out the reaction glycyl-tRNA(Ala) + H2O = tRNA(Ala) + glycine + H(+). The catalysed reaction is a D-aminoacyl-tRNA + H2O = a tRNA + a D-alpha-amino acid + H(+). In terms of biological role, an aminoacyl-tRNA editing enzyme that deacylates mischarged D-aminoacyl-tRNAs. Also deacylates mischarged glycyl-tRNA(Ala), protecting cells against glycine mischarging by AlaRS. Acts via tRNA-based rather than protein-based catalysis; rejects L-amino acids rather than detecting D-amino acids in the active site. By recycling D-aminoacyl-tRNA to D-amino acids and free tRNA molecules, this enzyme counteracts the toxicity associated with the formation of D-aminoacyl-tRNA entities in vivo and helps enforce protein L-homochirality. This is D-aminoacyl-tRNA deacylase from Acidovorax ebreus (strain TPSY) (Diaphorobacter sp. (strain TPSY)).